The chain runs to 298 residues: ATP synthase gamma chain (298 aa).

This sequence belongs to the ATPase gamma chain family. In terms of assembly, F-type ATPases have 2 components, CF(1) - the catalytic core - and CF(0) - the membrane proton channel. CF(1) has five subunits: alpha(3), beta(3), gamma(1), delta(1), epsilon(1). CF(0) has three main subunits: a, b and c.

It localises to the cell inner membrane. Functionally, produces ATP from ADP in the presence of a proton gradient across the membrane. The gamma chain is believed to be important in regulating ATPase activity and the flow of protons through the CF(0) complex. This Wolinella succinogenes (strain ATCC 29543 / DSM 1740 / CCUG 13145 / JCM 31913 / LMG 7466 / NCTC 11488 / FDC 602W) (Vibrio succinogenes) protein is ATP synthase gamma chain.